We begin with the raw amino-acid sequence, 123 residues long: uncharacterized protein (123 aa).

3 helical membrane-spanning segments follow: residues 7 to 29, 44 to 66, and 79 to 101; these read VKHL…FDAV, FFIH…VHRI, and LGLY…AAMA.

The protein resides in the cell membrane. This is an uncharacterized protein from Bacillus subtilis (strain 168).